We begin with the raw amino-acid sequence, 357 residues long: 3'-hydroxy-N-methyl-(S)-coclaurine 4'-O-methyltransferase 2 (357 aa).

Asp226 contributes to the S-adenosyl-L-methionine binding site. Catalysis depends on His264, which acts as the Proton acceptor.

The protein belongs to the class I-like SAM-binding methyltransferase superfamily. Cation-independent O-methyltransferase family. COMT subfamily. In terms of assembly, homodimer. In terms of tissue distribution, expressed in roots, stems, leaves and flowers.

The enzyme catalyses (S)-3'-hydroxy-N-methylcoclaurine + S-adenosyl-L-methionine = (S)-reticuline + S-adenosyl-L-homocysteine + H(+). The protein operates within alkaloid biosynthesis; (S)-reticuline biosynthesis; (S)-reticuline from (S)-norcoclaurine: step 4/4. Its function is as follows. Involved in the biosynthesis of benzylisoquinoline alkaloids. Catalyzes the transfer of the methyl group to the 4'-hydroxyl group of 3'-hydroxy-N-methylcoclaurine to form reticuline. Can also use laudanosoline and, with a lower activity, 6-O-methylnorlaudanosoline and norlaudanosoline as substrates. Also involved in the papaverine biosynthesis. The protein is 3'-hydroxy-N-methyl-(S)-coclaurine 4'-O-methyltransferase 2 of Papaver somniferum (Opium poppy).